Reading from the N-terminus, the 543-residue chain is Chaperonin GroEL (543 aa).

ATP is bound by residues 29–32, 86–90, Gly-413, 476–478, and Asp-492; these read TLGP, DGTTT, and NAA.

This sequence belongs to the chaperonin (HSP60) family. Forms a cylinder of 14 subunits composed of two heptameric rings stacked back-to-back. Interacts with the co-chaperonin GroES.

The protein resides in the cytoplasm. It catalyses the reaction ATP + H2O + a folded polypeptide = ADP + phosphate + an unfolded polypeptide.. Its function is as follows. Together with its co-chaperonin GroES, plays an essential role in assisting protein folding. The GroEL-GroES system forms a nano-cage that allows encapsulation of the non-native substrate proteins and provides a physical environment optimized to promote and accelerate protein folding. In Streptococcus pyogenes serotype M5 (strain Manfredo), this protein is Chaperonin GroEL.